The following is a 355-amino-acid chain: UDP-N-acetylglucosamine--N-acetylmuramyl-(pentapeptide) pyrophosphoryl-undecaprenol N-acetylglucosamine transferase (355 aa).

Residues 12–14, N124, R163, S191, I243, 262–267, and Q288 contribute to the UDP-N-acetyl-alpha-D-glucosamine site; these read TGG and ALTVAE.

It belongs to the glycosyltransferase 28 family. MurG subfamily.

The protein localises to the cell inner membrane. It carries out the reaction di-trans,octa-cis-undecaprenyl diphospho-N-acetyl-alpha-D-muramoyl-L-alanyl-D-glutamyl-meso-2,6-diaminopimeloyl-D-alanyl-D-alanine + UDP-N-acetyl-alpha-D-glucosamine = di-trans,octa-cis-undecaprenyl diphospho-[N-acetyl-alpha-D-glucosaminyl-(1-&gt;4)]-N-acetyl-alpha-D-muramoyl-L-alanyl-D-glutamyl-meso-2,6-diaminopimeloyl-D-alanyl-D-alanine + UDP + H(+). It functions in the pathway cell wall biogenesis; peptidoglycan biosynthesis. Functionally, cell wall formation. Catalyzes the transfer of a GlcNAc subunit on undecaprenyl-pyrophosphoryl-MurNAc-pentapeptide (lipid intermediate I) to form undecaprenyl-pyrophosphoryl-MurNAc-(pentapeptide)GlcNAc (lipid intermediate II). The protein is UDP-N-acetylglucosamine--N-acetylmuramyl-(pentapeptide) pyrophosphoryl-undecaprenol N-acetylglucosamine transferase of Tolumonas auensis (strain DSM 9187 / NBRC 110442 / TA 4).